A 171-amino-acid polypeptide reads, in one-letter code: Ribosome maturation factor RimM (171 aa).

The 73-residue stretch at 98–170 (EGEFYLHQII…AVQVSVPEGL (73 aa)) folds into the PRC barrel domain.

It belongs to the RimM family. Binds ribosomal protein uS19.

It is found in the cytoplasm. Functionally, an accessory protein needed during the final step in the assembly of 30S ribosomal subunit, possibly for assembly of the head region. Essential for efficient processing of 16S rRNA. May be needed both before and after RbfA during the maturation of 16S rRNA. It has affinity for free ribosomal 30S subunits but not for 70S ribosomes. This Pediococcus pentosaceus (strain ATCC 25745 / CCUG 21536 / LMG 10740 / 183-1w) protein is Ribosome maturation factor RimM.